The following is a 273-amino-acid chain: 2,3,4,5-tetrahydropyridine-2,6-dicarboxylate N-succinyltransferase (273 aa).

Substrate contacts are provided by Arg-106 and Asp-143.

Belongs to the transferase hexapeptide repeat family. Homotrimer.

Its subcellular location is the cytoplasm. The catalysed reaction is (S)-2,3,4,5-tetrahydrodipicolinate + succinyl-CoA + H2O = (S)-2-succinylamino-6-oxoheptanedioate + CoA. Its pathway is amino-acid biosynthesis; L-lysine biosynthesis via DAP pathway; LL-2,6-diaminopimelate from (S)-tetrahydrodipicolinate (succinylase route): step 1/3. In Wolbachia sp. subsp. Brugia malayi (strain TRS), this protein is 2,3,4,5-tetrahydropyridine-2,6-dicarboxylate N-succinyltransferase.